Here is a 226-residue protein sequence, read N- to C-terminus: Cytochrome c biogenesis ATP-binding export protein CcmA (226 aa).

Residues 19 to 226 (LRANDLAFSR…LGGAHALPPA (208 aa)) form the ABC transporter domain. An ATP-binding site is contributed by 51–58 (GPNGSGKS).

This sequence belongs to the ABC transporter superfamily. CcmA exporter (TC 3.A.1.107) family. The complex is composed of two ATP-binding proteins (CcmA) and two transmembrane proteins (CcmB).

The protein localises to the cell inner membrane. The enzyme catalyses heme b(in) + ATP + H2O = heme b(out) + ADP + phosphate + H(+). Its function is as follows. Part of the ABC transporter complex CcmAB involved in the biogenesis of c-type cytochromes; once thought to export heme, this seems not to be the case, but its exact role is uncertain. Responsible for energy coupling to the transport system. This is Cytochrome c biogenesis ATP-binding export protein CcmA from Cupriavidus pinatubonensis (strain JMP 134 / LMG 1197) (Cupriavidus necator (strain JMP 134)).